We begin with the raw amino-acid sequence, 394 residues long: Elongation factor Tu (394 aa).

Residues 10–205 enclose the tr-type G domain; sequence KPHMNVGTIG…TMDSYFDLPE (196 aa). The G1 stretch occupies residues 19–26; the sequence is GHVDHGKT. Residue 19 to 26 coordinates GTP; the sequence is GHVDHGKT. Residue Thr26 coordinates Mg(2+). A G2 region spans residues 61–65; it reads GITIN. The segment at 82-85 is G3; the sequence is DCPG. GTP is bound by residues 82 to 86 and 137 to 140; these read DCPGH and NKLD. The tract at residues 137-140 is G4; the sequence is NKLD. Residues 173 to 175 form a G5 region; it reads SAF.

Belongs to the TRAFAC class translation factor GTPase superfamily. Classic translation factor GTPase family. EF-Tu/EF-1A subfamily. In terms of assembly, monomer.

The protein localises to the cytoplasm. The enzyme catalyses GTP + H2O = GDP + phosphate + H(+). GTP hydrolase that promotes the GTP-dependent binding of aminoacyl-tRNA to the A-site of ribosomes during protein biosynthesis. In Borrelia hermsii (strain HS1 / DAH), this protein is Elongation factor Tu.